The sequence spans 446 residues: Vacuolar cation/proton exchanger 4 (446 aa).

Positions 1–16 are enriched in low complexity; the sequence is MSSISTESSSNLSLLE. The segment at 1–33 is disordered; sequence MSSISTESSSNLSLLENGGGGSDKPTAETSRRV. Residues 1–69 are Cytoplasmic-facing; the sequence is MSSISTESSS…MRRILTNLQE (69 aa). Residues 70 to 90 traverse the membrane as a helical segment; that stretch reads VLLGTKLFILFPAVPLAVVAH. Topologically, residues 91 to 96 are extracellular; it reads RYDCPR. The helical transmembrane segment at 97–117 threads the bilayer; sequence AWVFALSLLGLTPLAERISFL. At 118–128 the chain is on the cytoplasmic side; that stretch reads TEQIAFHTGPT. The helical transmembrane segment at 129–149 threads the bilayer; the sequence is VGGLMNATCGNATEMIIAILA. Residues 138–173 are cation selection; sequence GNATEMIIAILAVGQRKMRIVKLSLLGSILSNLLFV. Topologically, residues 150–162 are extracellular; it reads VGQRKMRIVKLSL. The chain crosses the membrane as a helical span at residues 163-183; that stretch reads LGSILSNLLFVLGTSLFLGGI. Over 184-196 the chain is Cytoplasmic; sequence SNLRKHQSFDPRQ. A helical membrane pass occupies residues 197–217; it reads GDMNSMLLYLALLCQTLPMIM. Residues 218-238 lie on the Extracellular side of the membrane; that stretch reads RFTMEAEEYDGSDVVVLSRAS. Residues 239–259 form a helical membrane-spanning segment; it reads SFVMLIAYLAFLIFHLFSSHL. The Cytoplasmic segment spans residues 260–285; it reads SPPPPPLPQREDVHDDDVSDKEEEGA. The chain crosses the membrane as a helical span at residues 286–306; that stretch reads VIGMWSAIFWLIIMTLLVALL. Topologically, residues 307–319 are extracellular; it reads SDYLVSTIQDAAD. The helical transmembrane segment at 320–340 threads the bilayer; the sequence is SWGLSVGFIGIILLPIVGNAA. Residues 337-372 are cation selection; the sequence is GNAAEHAGAVIFAFRNKLDITLGIALGSATQIALFV. Over 341–359 the chain is Cytoplasmic; that stretch reads EHAGAVIFAFRNKLDITLG. Residues 360–380 form a helical membrane-spanning segment; it reads IALGSATQIALFVVPVTVLVA. Residues 381-388 lie on the Extracellular side of the membrane; it reads WTMGIEMD. A helical transmembrane segment spans residues 389 to 409; that stretch reads LNFNLLETACFALSILVTSLV. Over 410–416 the chain is Cytoplasmic; that stretch reads LQDGTSN. Residues 417–437 form a helical membrane-spanning segment; the sequence is YMKGLVLLLCYVVIAACFFVS. The Extracellular segment spans residues 438 to 446; it reads NSPSSKLLF.

The protein belongs to the Ca(2+):cation antiporter (CaCA) (TC 2.A.19) family. Cation/proton exchanger (CAX) subfamily. In terms of tissue distribution, expressed at low levels in all tissues.

The protein localises to the vacuole membrane. Functionally, vacuolar cation/proton exchanger (CAX). Translocates Ca(2+) and other metal ions into vacuoles using the proton gradient formed by H(+)-ATPase and H(+)-pyrophosphatase. Cation selectivity transport in tobacco root tonoplast vesicles is Cd(2+)&gt;Zn(2+)&gt;&gt;Ca(2+)&gt;&gt;&gt;Mn(2+). The sequence is that of Vacuolar cation/proton exchanger 4 (CAX4) from Arabidopsis thaliana (Mouse-ear cress).